Consider the following 876-residue polypeptide: Alanine--tRNA ligase (876 aa).

At K74 the chain carries N6-acetyllysine. Residues H564, H568, C666, and H670 each coordinate Zn(2+).

It belongs to the class-II aminoacyl-tRNA synthetase family. As to quaternary structure, homotetramer. Requires Zn(2+) as cofactor.

It is found in the cytoplasm. It carries out the reaction tRNA(Ala) + L-alanine + ATP = L-alanyl-tRNA(Ala) + AMP + diphosphate. Catalyzes the attachment of alanine to tRNA(Ala) in a two-step reaction: alanine is first activated by ATP to form Ala-AMP and then transferred to the acceptor end of tRNA(Ala). Also edits incorrectly charged Ser-tRNA(Ala) and Gly-tRNA(Ala) via its editing domain. The protein is Alanine--tRNA ligase of Escherichia coli O1:K1 / APEC.